A 354-amino-acid polypeptide reads, in one-letter code: GTPase Obg (354 aa).

The 159-residue stretch at 1-159 folds into the Obg domain; it reads MKFVDEVKIH…RDLVLELKLL (159 aa). In terms of domain architecture, OBG-type G spans 160-333; that stretch reads ADVGIVGYPN…LLDAVGRALF (174 aa). GTP is bound by residues 166-173, 191-195, 212-215, 283-286, and 314-316; these read GYPNAGKS, FTTLT, DIPG, TKID, and SAV. The Mg(2+) site is built by Ser173 and Thr193.

This sequence belongs to the TRAFAC class OBG-HflX-like GTPase superfamily. OBG GTPase family. Monomer. Mg(2+) serves as cofactor.

The protein localises to the cytoplasm. An essential GTPase which binds GTP, GDP and possibly (p)ppGpp with moderate affinity, with high nucleotide exchange rates and a fairly low GTP hydrolysis rate. Plays a role in control of the cell cycle, stress response, ribosome biogenesis and in those bacteria that undergo differentiation, in morphogenesis control. The polypeptide is GTPase Obg (Anaeromyxobacter dehalogenans (strain 2CP-1 / ATCC BAA-258)).